The primary structure comprises 279 residues: Urease accessory protein UreD (279 aa).

Belongs to the UreD family. As to quaternary structure, ureD, UreF and UreG form a complex that acts as a GTP-hydrolysis-dependent molecular chaperone, activating the urease apoprotein by helping to assemble the nickel containing metallocenter of UreC. The UreE protein probably delivers the nickel.

Its subcellular location is the cytoplasm. Functionally, required for maturation of urease via the functional incorporation of the urease nickel metallocenter. This chain is Urease accessory protein UreD, found in Nitrosospira multiformis (strain ATCC 25196 / NCIMB 11849 / C 71).